A 554-amino-acid chain; its full sequence is Neutral amino acid transporter 9 (554 aa).

Residues 1–112 (MDSDQTPLIN…GSDGTGKNSS (112 aa)) are Cytoplasmic-facing. Residues 113–133 (IVTIFMIWNTMMGTSILSIPW) traverse the membrane as a helical segment. The important for arginine binding and amino acid transport stretch occupies residues 122 to 127 (TMMGTS). Ser127 contacts arginine. Over 134 to 139 (GIKQAG) the chain is Lumenal. Residues 140–160 (FTTGVCILFLMGILTLYCCYR) form a helical membrane-spanning segment. Topologically, residues 161–191 (VVKSRGTIPLTDTSNWEFPDVCQYYFGSFGR) are cytoplasmic. A helical transmembrane segment spans residues 192-218 (WSSLLFSLVSLIGAMIVYWVLMSNFLF). The Lumenal portion of the chain corresponds to 219-276 (NTGKFIYNYVNDVNVTDDVLSNNGSDKVICPNPDSTRPLNKSMDTYFGNGTNYEQFET). Asn232, Asn241, Asn258, and Asn267 each carry an N-linked (GlcNAc...) asparagine glycan. Cys248 and Cys417 are oxidised to a cystine. The helical transmembrane segment at 277–293 (WWSKTNTVPFYLVVLLL) threads the bilayer. Residues 294–302 (PLLSFRSPS) are Cytoplasmic-facing. A helical membrane pass occupies residues 303–327 (FFAKFNILGTVSIIYLVSLVTLKAA). Residues 328-349 (HLGFHLRFSWNQVQEFFVPEFR) are Lumenal-facing. The helical transmembrane segment at 350–370 (LSFPQLTGILTLAFFIHNCII) threads the bilayer. The Cytoplasmic portion of the chain corresponds to 371 to 387 (TLLKNNRNQKNNVRDLS). A helical transmembrane segment spans residues 388-408 (IAYLLVGLTYIYVGVAVFASF). The Lumenal portion of the chain corresponds to 409-430 (PSPPLSKQCIQQNFLDNFPSSD). The helical transmembrane segment at 431-451 (ILAFVARIFLLFQMMTVYPLL) threads the bilayer. The CARC motif motif lies at 437–447 (RIFLLFQMMTV). The short motif at 450–456 (LLGYLVR) is the CRAC motif element. Topologically, residues 452 to 472 (GYLVRVQLLGHIFGDIYPSVF) are cytoplasmic. Residues 473–493 (HVLALNIAVVGVGVIMARFYP) traverse the membrane as a helical segment. The Lumenal segment spans residues 494-500 (NIGGIIR). The helical transmembrane segment at 501–521 (FSGAACGLAFVFVYPSLIHMI) threads the bilayer. The Cytoplasmic segment spans residues 522 to 533 (SLHRRGQLKVHS). The chain crosses the membrane as a helical span at residues 534–554 (ILIHVSIIVLGIANLIAQFFM).

This sequence belongs to the amino acid/polyamine transporter 2 family. SLC38A9 subfamily. In terms of assembly, associated component of the Ragulator complex. Associated component of the Rag GTPases heterodimers. In terms of processing, glycosylated.

The protein resides in the lysosome membrane. Its subcellular location is the late endosome membrane. The catalysed reaction is L-leucine(in) = L-leucine(out). It carries out the reaction L-tyrosine(in) = L-tyrosine(out). The enzyme catalyses L-glutamine(out) = L-glutamine(in). It catalyses the reaction L-asparagine(out) = L-asparagine(in). Its function is as follows. Lysosomal amino acid transporter involved in the activation of mTORC1 in response to amino acid levels. Probably acts as an amino acid sensor of the Rag GTPases and Ragulator complexes, 2 complexes involved in amino acid sensing and activation of mTORC1, a signaling complex promoting cell growth in response to growth factors, energy levels, and amino acids. Following activation by amino acids, the Ragulator and Rag GTPases function as a scaffold recruiting mTORC1 to lysosomes where it is in turn activated. SLC38A9 mediates transport of amino acids with low capacity and specificity with a slight preference for polar amino acids. Acts as an arginine sensor. Following activation by arginine binding, mediates transport of L-glutamine, leucine and tyrosine with high efficiency, and is required for the efficient utilization of these amino acids after lysosomal protein degradation. However, the transport mechanism is not well defined and the role of sodium is not clear. Guanine exchange factor (GEF) that, upon arginine binding, stimulates GDP release from RRAGA and therefore activates the Rag GTPase heterodimer and the mTORC1 pathway in response to nutrient sufficiency. This chain is Neutral amino acid transporter 9, found in Xenopus tropicalis (Western clawed frog).